The primary structure comprises 245 residues: High affinity immunoglobulin epsilon receptor subunit alpha (245 aa).

An N-terminal signal peptide occupies residues 1–23; sequence MDTGGSARLCLALVLISLGVMLT. At 24–204 the chain is on the extracellular side; sequence ATQKSVVSLD…DYTIEYRWLQ (181 aa). 2 consecutive Ig-like domains span residues 28–103 and 113–181; these read SVVS…KPVY and LQSS…LNKV. The cysteines at positions 49 and 91 are disulfide-linked. Residues N52, N53, N58, N65, N123, N158, and N167 are each glycosylated (N-linked (GlcNAc...) asparagine). C130 and C174 form a disulfide bridge. A helical membrane pass occupies residues 205 to 223; sequence LIFPSLAVILFAVDTGLWF. Topologically, residues 224–245 are cytoplasmic; sequence STHKQFESILKIQKTGKGKKKG.

Tetramer of an alpha chain, a beta chain, and two disulfide linked gamma chains. Interacts with IGHE (via CH3 region). Expressed in leukocytes and pinealocytes at night (at protein level).

It localises to the cell membrane. The protein resides in the secreted. Its function is as follows. High-affinity receptor for immunoglobulin epsilon/IgE. Mediates IgE effector functions in myeloid cells. Upon IgE binding and antigen/allergen cross-linking initiates signaling pathways that lead to myeloid cell activation and differentiation. On mast cells, basophils and eosinophils stimulates the secretion of vasoactive amines, lipid mediators and cytokines that contribute to inflammatory response, tissue remodeling and cytotoxicity against microbes. Triggers the immediate hypersensitivity response to allergens as a host defense mechanism against helminth parasites, pathogenic bacteria and venom toxicity. When dysregulated, it can elicit harmful life-threatening allergic and anaphylactic reactions. In Rattus norvegicus (Rat), this protein is High affinity immunoglobulin epsilon receptor subunit alpha (Fcer1a).